We begin with the raw amino-acid sequence, 288 residues long: Energy-coupling factor transporter ATP-binding protein EcfA2 (288 aa).

One can recognise an ABC transporter domain in the interval 3-246 (IKLEQLGYCY…PDELVDLGLS (244 aa)). 40 to 47 (GHTGSGKS) lines the ATP pocket.

Belongs to the ABC transporter superfamily. Energy-coupling factor EcfA family. In terms of assembly, forms a stable energy-coupling factor (ECF) transporter complex composed of 2 membrane-embedded substrate-binding proteins (S component), 2 ATP-binding proteins (A component) and 2 transmembrane proteins (T component).

The protein resides in the cell membrane. Functionally, ATP-binding (A) component of a common energy-coupling factor (ECF) ABC-transporter complex. Unlike classic ABC transporters this ECF transporter provides the energy necessary to transport a number of different substrates. In Listeria innocua serovar 6a (strain ATCC BAA-680 / CLIP 11262), this protein is Energy-coupling factor transporter ATP-binding protein EcfA2.